The following is a 173-amino-acid chain: NADH-quinone oxidoreductase subunit B (173 aa).

[4Fe-4S] cluster contacts are provided by C46, C47, C112, and C142.

It belongs to the complex I 20 kDa subunit family. NDH-1 is composed of 14 different subunits. Subunits NuoB, C, D, E, F, and G constitute the peripheral sector of the complex. Requires [4Fe-4S] cluster as cofactor.

The protein resides in the cell membrane. It carries out the reaction a quinone + NADH + 5 H(+)(in) = a quinol + NAD(+) + 4 H(+)(out). Its function is as follows. NDH-1 shuttles electrons from NADH, via FMN and iron-sulfur (Fe-S) centers, to quinones in the respiratory chain. The immediate electron acceptor for the enzyme in this species is believed to be a menaquinone. Couples the redox reaction to proton translocation (for every two electrons transferred, four hydrogen ions are translocated across the cytoplasmic membrane), and thus conserves the redox energy in a proton gradient. The protein is NADH-quinone oxidoreductase subunit B of Desulfitobacterium hafniense (strain DSM 10664 / DCB-2).